A 399-amino-acid chain; its full sequence is Yellow-related salivary protein LJM11 (399 aa).

An N-terminal signal peptide occupies residues 1–18 (MKVFFSIFTLVLFQGTLG). Cysteine 115 and cysteine 186 are disulfide-bonded. Asparagine 213 is a glycosylation site (N-linked (GlcNAc...) asparagine). Residues cysteine 319 and cysteine 395 are joined by a disulfide bond. Residues threonine 345, asparagine 360, and phenylalanine 362 each coordinate serotonin.

It belongs to the major royal jelly protein family. As to expression, salivary gland (at protein level).

Its subcellular location is the secreted. In terms of biological role, probably modulates blood feeding of sand flies on vertebrate species by binding and sequestering different mediators involved in the host response. Binds biogenic amines. Binds serotonin with high affinity. Binds adrenaline and noradrenaline. Binds dopamine and octopamine. Poorly binds histamine. Induces a delayed type hypersensitivity response in host tissues. Induces systemic Th1 immune response in the host. Immunogenic; elicits antibody production in the host. Functions as a chemoattractant for host neutrophils; likely acts through a G-protein-coupled receptor and effect is dependent on calcium influx. (Microbial infection) Modulates infection caused by Leishmania species in the host. This is Yellow-related salivary protein LJM11 from Lutzomyia longipalpis (Sand fly).